The chain runs to 336 residues: Tryptophan--tRNA ligase (336 aa).

Residues 16–18 (QPT) and 24–25 (GN) each bind ATP. Residues 17-25 (PTGQLHLGN) carry the 'HIGH' region motif. Asp-140 serves as a coordination point for L-tryptophan. ATP is bound by residues 152 to 154 (GED), Val-191, and 200 to 204 (KMSKS). The 'KMSKS' region motif lies at 200-204 (KMSKS).

It belongs to the class-I aminoacyl-tRNA synthetase family. As to quaternary structure, homodimer.

It localises to the cytoplasm. The enzyme catalyses tRNA(Trp) + L-tryptophan + ATP = L-tryptophyl-tRNA(Trp) + AMP + diphosphate + H(+). Functionally, catalyzes the attachment of tryptophan to tRNA(Trp). The polypeptide is Tryptophan--tRNA ligase (Gloeobacter violaceus (strain ATCC 29082 / PCC 7421)).